The chain runs to 318 residues: Polyprenal reductase (318 aa).

Topologically, residues 1–19 are cytoplasmic; the sequence is MAPWAAAQLWALNPLRALW. Residues 20–40 traverse the membrane as a helical segment; it reads LTLAAAFLLTLLLQLVPPGLL. Residues 41–80 lie on the Lumenal side of the membrane; the sequence is PGCALFQDLIRYGKTKREGQSRPAVCRVFDVPKRYFSHFY. A helical transmembrane segment spans residues 81 to 101; sequence IISALWNGFLLWHLTQSVFLG. The Cytoplasmic segment spans residues 102–119; the sequence is VPFPNWLHGLLRILGASQ. The helical transmembrane segment at 120–140 threads the bilayer; that stretch reads FQGGELALSAFLVLVFLWLHS. The Lumenal segment spans residues 141-156; that stretch reads LRRLFECFYVSVFSNT. The helical transmembrane segment at 157 to 177 threads the bilayer; the sequence is VIHIVQYCFGLVYYVLTGLTV. Residues 178–194 lie on the Cytoplasmic side of the membrane; that stretch reads LSQVPMDGRNAYVIGKN. Residues 195 to 215 traverse the membrane as a helical segment; sequence LLMQARWFHILGMLMFIWSSV. Topologically, residues 216 to 265 are lumenal; sequence HQYKCHVILGNLRKNKAGVVIHCNHRIPFGDWFEYVSSPNYLAELMIYIS. A helical transmembrane segment spans residues 266–286; sequence MAVTFGFHNLTWWLVVTYVFF. The Cytoplasmic segment spans residues 287-318; it reads SQALSAFLSHKFYKSKFVSYPKHRKAFLPFLF.

The protein belongs to the steroid 5-alpha reductase family. Polyprenal reductase subfamily.

Its subcellular location is the endoplasmic reticulum membrane. It carries out the reaction a di-trans,poly-cis-dolichal + NADP(+) = a di-trans,poly-cis-polyprenal + NADPH + H(+). The catalysed reaction is a 3-oxo-5alpha-steroid + NADP(+) = a 3-oxo-Delta(4)-steroid + NADPH + H(+). The enzyme catalyses androst-4-ene-3,17-dione + NADPH + H(+) = 5alpha-androstan-3,17-dione + NADP(+). It catalyses the reaction 17beta-hydroxy-5alpha-androstan-3-one + NADP(+) = testosterone + NADPH + H(+). Its pathway is protein modification; protein glycosylation. Plays a key role in early steps of protein N-linked glycosylation by being involved in the conversion of polyprenol into dolichol. Acts as a polyprenal reductase that mediates the reduction of polyprenal into dolichal in a NADP-dependent mechanism. Dolichols are required for the synthesis of dolichol-linked monosaccharides and the oligosaccharide precursor used for N-glycosylation. Also able to convert testosterone (T) into 5-alpha-dihydrotestosterone (DHT). This Ailuropoda melanoleuca (Giant panda) protein is Polyprenal reductase (SRD5A3).